The chain runs to 469 residues: Adenosylhomocysteinase (469 aa).

Residues T63, D139, and E164 each coordinate substrate. 165–167 lines the NAD(+) pocket; that stretch reads TTT. Positions 194 and 198 each coordinate substrate. Residues N199, 228–233, E251, N300, 321–323, and N375 contribute to the NAD(+) site; these read GYGDVG and IGH.

This sequence belongs to the adenosylhomocysteinase family. The cofactor is NAD(+).

The protein resides in the cytoplasm. The catalysed reaction is S-adenosyl-L-homocysteine + H2O = L-homocysteine + adenosine. Its pathway is amino-acid biosynthesis; L-homocysteine biosynthesis; L-homocysteine from S-adenosyl-L-homocysteine: step 1/1. Its function is as follows. May play a key role in the regulation of the intracellular concentration of adenosylhomocysteine. This chain is Adenosylhomocysteinase, found in Ectopseudomonas mendocina (strain ymp) (Pseudomonas mendocina).